The chain runs to 336 residues: Methionyl-tRNA formyltransferase (336 aa).

110 to 113 (SLLP) provides a ligand contact to (6S)-5,6,7,8-tetrahydrofolate.

Belongs to the Fmt family.

It carries out the reaction L-methionyl-tRNA(fMet) + (6R)-10-formyltetrahydrofolate = N-formyl-L-methionyl-tRNA(fMet) + (6S)-5,6,7,8-tetrahydrofolate + H(+). Attaches a formyl group to the free amino group of methionyl-tRNA(fMet). The formyl group appears to play a dual role in the initiator identity of N-formylmethionyl-tRNA by promoting its recognition by IF2 and preventing the misappropriation of this tRNA by the elongation apparatus. The sequence is that of Methionyl-tRNA formyltransferase from Prochlorococcus marinus (strain NATL2A).